A 373-amino-acid polypeptide reads, in one-letter code: 4-hydroxy-3-methylbut-2-en-1-yl diphosphate synthase (flavodoxin) (373 aa).

4 residues coordinate [4Fe-4S] cluster: cysteine 270, cysteine 273, cysteine 305, and glutamate 312.

It belongs to the IspG family. [4Fe-4S] cluster serves as cofactor.

It catalyses the reaction (2E)-4-hydroxy-3-methylbut-2-enyl diphosphate + oxidized [flavodoxin] + H2O + 2 H(+) = 2-C-methyl-D-erythritol 2,4-cyclic diphosphate + reduced [flavodoxin]. The protein operates within isoprenoid biosynthesis; isopentenyl diphosphate biosynthesis via DXP pathway; isopentenyl diphosphate from 1-deoxy-D-xylulose 5-phosphate: step 5/6. In terms of biological role, converts 2C-methyl-D-erythritol 2,4-cyclodiphosphate (ME-2,4cPP) into 1-hydroxy-2-methyl-2-(E)-butenyl 4-diphosphate. The polypeptide is 4-hydroxy-3-methylbut-2-en-1-yl diphosphate synthase (flavodoxin) (Serratia proteamaculans (strain 568)).